Reading from the N-terminus, the 465-residue chain is Probable Xaa-Pro aminopeptidase pepP (465 aa).

Positions 261, 272, 395, and 435 each coordinate Mn(2+).

The protein belongs to the peptidase M24B family. Requires Mn(2+) as cofactor.

The catalysed reaction is Release of any N-terminal amino acid, including proline, that is linked to proline, even from a dipeptide or tripeptide.. Catalyzes the removal of a penultimate prolyl residue from the N-termini of peptides. The polypeptide is Probable Xaa-Pro aminopeptidase pepP (pepP) (Talaromyces marneffei (strain ATCC 18224 / CBS 334.59 / QM 7333) (Penicillium marneffei)).